The following is a 795-amino-acid chain: Protocadherin beta-5 (795 aa).

An N-terminal signal peptide occupies residues 1–30; it reads METALAKTPQKRQVMFLAILLLLWEAGSEA. The Extracellular segment spans residues 31–689; sequence VRYSIPEETE…AQADSLTVYL (659 aa). Cadherin domains follow at residues 35-133, 138-242, 247-346, 351-450, and 455-560; these read IPEE…APEF, MLLK…APEF, YEVQ…APEL, LSSP…APAF, and YTLF…SPFV. Asn-169 carries N-linked (GlcNAc...) asparagine glycosylation. The residue at position 296 (Lys-296) is an N6-acetyllysine. N-linked (GlcNAc...) asparagine glycosylation is found at Asn-417 and Asn-435. Asn-566 is a glycosylation site (N-linked (GlcNAc...) asparagine). The 104-residue stretch at 567–670 folds into the Cadherin 6 domain; the sequence is GSAPCTELVP…LVDGFSQPYL (104 aa). Residues 690 to 710 traverse the membrane as a helical segment; sequence VVALASVSSLFLFSVLLFVAV. At 711-795 the chain is on the cytoplasmic side; that stretch reads RLCRRSRAAP…AAFRNSFGLN (85 aa).

It localises to the cell membrane. Functionally, potential calcium-dependent cell-adhesion protein. May be involved in the establishment and maintenance of specific neuronal connections in the brain. This Homo sapiens (Human) protein is Protocadherin beta-5 (PCDHB5).